Reading from the N-terminus, the 335-residue chain is N-acetyl-gamma-glutamyl-phosphate reductase (335 aa).

The active site involves C156.

Belongs to the NAGSA dehydrogenase family. Type 1 subfamily.

The protein localises to the cytoplasm. The enzyme catalyses N-acetyl-L-glutamate 5-semialdehyde + phosphate + NADP(+) = N-acetyl-L-glutamyl 5-phosphate + NADPH + H(+). It functions in the pathway amino-acid biosynthesis; L-arginine biosynthesis; N(2)-acetyl-L-ornithine from L-glutamate: step 3/4. Functionally, catalyzes the NADPH-dependent reduction of N-acetyl-5-glutamyl phosphate to yield N-acetyl-L-glutamate 5-semialdehyde. The chain is N-acetyl-gamma-glutamyl-phosphate reductase from Aeromonas hydrophila subsp. hydrophila (strain ATCC 7966 / DSM 30187 / BCRC 13018 / CCUG 14551 / JCM 1027 / KCTC 2358 / NCIMB 9240 / NCTC 8049).